The sequence spans 131 residues: Ribosome-binding factor A (131 aa).

Residues 110-131 (QMNLGEDNEDNEDKENNDPGEE) form a disordered region. Acidic residues predominate over residues 115-131 (EDNEDNEDKENNDPGEE).

The protein belongs to the RbfA family. In terms of assembly, monomer. Binds 30S ribosomal subunits, but not 50S ribosomal subunits or 70S ribosomes.

Its subcellular location is the cytoplasm. Functionally, one of several proteins that assist in the late maturation steps of the functional core of the 30S ribosomal subunit. Associates with free 30S ribosomal subunits (but not with 30S subunits that are part of 70S ribosomes or polysomes). Required for efficient processing of 16S rRNA. May interact with the 5'-terminal helix region of 16S rRNA. This Natranaerobius thermophilus (strain ATCC BAA-1301 / DSM 18059 / JW/NM-WN-LF) protein is Ribosome-binding factor A.